The primary structure comprises 389 residues: Dual-specificity RNA methyltransferase RlmN (389 aa).

Glutamate 94 functions as the Proton acceptor in the catalytic mechanism. In terms of domain architecture, Radical SAM core spans 134–367; it reads PRVRVTQCIS…CFVRRRRGDD (234 aa). The cysteines at positions 141 and 372 are disulfide-linked. Cysteine 148, cysteine 152, and cysteine 155 together coordinate [4Fe-4S] cluster. S-adenosyl-L-methionine-binding positions include 197-198, serine 229, 253-255, and asparagine 329; these read GE and SLH. The active-site S-methylcysteine intermediate is cysteine 372.

It belongs to the radical SAM superfamily. RlmN family. Requires [4Fe-4S] cluster as cofactor.

It localises to the cytoplasm. The catalysed reaction is adenosine(2503) in 23S rRNA + 2 reduced [2Fe-2S]-[ferredoxin] + 2 S-adenosyl-L-methionine = 2-methyladenosine(2503) in 23S rRNA + 5'-deoxyadenosine + L-methionine + 2 oxidized [2Fe-2S]-[ferredoxin] + S-adenosyl-L-homocysteine. It carries out the reaction adenosine(37) in tRNA + 2 reduced [2Fe-2S]-[ferredoxin] + 2 S-adenosyl-L-methionine = 2-methyladenosine(37) in tRNA + 5'-deoxyadenosine + L-methionine + 2 oxidized [2Fe-2S]-[ferredoxin] + S-adenosyl-L-homocysteine. Specifically methylates position 2 of adenine 2503 in 23S rRNA and position 2 of adenine 37 in tRNAs. m2A2503 modification seems to play a crucial role in the proofreading step occurring at the peptidyl transferase center and thus would serve to optimize ribosomal fidelity. This chain is Dual-specificity RNA methyltransferase RlmN, found in Sorangium cellulosum (strain So ce56) (Polyangium cellulosum (strain So ce56)).